A 335-amino-acid chain; its full sequence is Pyridoxal 5'-phosphate synthase subunit PdxS (335 aa).

Asp-30 lines the D-ribose 5-phosphate pocket. Lys-87 serves as the catalytic Schiff-base intermediate with D-ribose 5-phosphate. Gly-159 contributes to the D-ribose 5-phosphate binding site. A D-glyceraldehyde 3-phosphate-binding site is contributed by Arg-171. D-ribose 5-phosphate contacts are provided by residues Gly-257 and 278–279 (GS).

Belongs to the PdxS/SNZ family. In the presence of PdxT, forms a dodecamer of heterodimers.

It catalyses the reaction aldehydo-D-ribose 5-phosphate + D-glyceraldehyde 3-phosphate + L-glutamine = pyridoxal 5'-phosphate + L-glutamate + phosphate + 3 H2O + H(+). The protein operates within cofactor biosynthesis; pyridoxal 5'-phosphate biosynthesis. Its function is as follows. Catalyzes the formation of pyridoxal 5'-phosphate from ribose 5-phosphate (RBP), glyceraldehyde 3-phosphate (G3P) and ammonia. The ammonia is provided by the PdxT subunit. Can also use ribulose 5-phosphate and dihydroxyacetone phosphate as substrates, resulting from enzyme-catalyzed isomerization of RBP and G3P, respectively. This Thermococcus kodakarensis (strain ATCC BAA-918 / JCM 12380 / KOD1) (Pyrococcus kodakaraensis (strain KOD1)) protein is Pyridoxal 5'-phosphate synthase subunit PdxS.